Consider the following 207-residue polypeptide: Zinc finger protein JAGGED-like (207 aa).

The span at methionine 1–aspartate 16 shows a compositional bias: low complexity. The tract at residues methionine 1 to arginine 20 is disordered. The C2H2-type zinc-finger motif lies at tyrosine 50–histidine 72.

As to expression, expressed in the emerging leaf, stamen and carpel primordia. Not expressed in the apical shoot meristem (SAM).

It localises to the nucleus. Acts with JAG to promote growth and patterning in stamens and carpels. Promotes the growth of the abaxial and adaxial sides of floral organs. Promotes the growth of the pollen-bearing microsporangia in anthers, the carpel walls of the gynoecium and the establishment of the correct number of cell layers in carpel walls. Promotes leaf blade growth and trichome development. The polypeptide is Zinc finger protein JAGGED-like (JGL) (Arabidopsis thaliana (Mouse-ear cress)).